The following is a 209-amino-acid chain: MLTAIRKNGLILAVFACVSTGLVALTYALTAEQIQQQEQKQLLQVLNQVIPHKYHDNPLAQACTLVNDDKLGTAKPMHAYLAQRDGQPTAIAIETIAPDGYNGEIKLIVGIANNGTVLGVRVLAHQETPGLGDKIDLRISNWVLGFNGQQVTADNQDDWKVRKDGGQFDQFTGATITPRAVVLAVKKAVEYVNQHQQQLHNQPNPCEGQ.

Residues 1–8 lie on the Cytoplasmic side of the membrane; it reads MLTAIRKN. A helical transmembrane segment spans residues 9–29; that stretch reads GLILAVFACVSTGLVALTYAL. At 30 to 209 the chain is on the periplasmic side; the sequence is TAEQIQQQEQ…HNQPNPCEGQ (180 aa). The residue at position 175 (Thr175) is an FMN phosphoryl threonine.

This sequence belongs to the RnfG family. As to quaternary structure, the complex is composed of six subunits: RnfA, RnfB, RnfC, RnfD, RnfE and RnfG. FMN is required as a cofactor.

The protein localises to the cell inner membrane. In terms of biological role, part of a membrane-bound complex that couples electron transfer with translocation of ions across the membrane. In Vibrio cholerae serotype O1 (strain ATCC 39541 / Classical Ogawa 395 / O395), this protein is Ion-translocating oxidoreductase complex subunit G.